The following is a 149-amino-acid chain: uncharacterized protein (149 aa).

A compositionally biased stretch (basic and acidic residues) spans 1-11; the sequence is MTKESKPDRLR. The disordered stretch occupies residues 1–20; sequence MTKESKPDRLRQMGALNPKP.

This is an uncharacterized protein from Sinorhizobium fredii (strain NBRC 101917 / NGR234).